Reading from the N-terminus, the 428-residue chain is Nucleoside diphosphate phosphatase ENTPD5 (428 aa).

Residues 1–24 (MATSWGTVFFMLVVSCVCSAVSHR) form the signal peptide. The active-site Proton acceptor is the Glu-172. N-linked (GlcNAc...) asparagine glycosylation occurs at Asn-232. 2 disulfides stabilise this stretch: Cys-272/Cys-303 and Cys-363/Cys-377. A glycan (N-linked (GlcNAc...) asparagine) is linked at Asn-368.

It belongs to the GDA1/CD39 NTPase family. In terms of assembly, monomer; active form. Homodimer; disulfide-linked. Homodimers are enzymatically inactive. Ca(2+) is required as a cofactor. It depends on Mg(2+) as a cofactor. Post-translationally, N-glycosylated; high-mannose type. Glycosylation is not essential for enzymatic activity. As to expression, expressed in adult liver, kidney, prostate, testis and colon. Much weaker expression in other tissues.

Its subcellular location is the endoplasmic reticulum. It is found in the secreted. It catalyses the reaction a ribonucleoside 5'-diphosphate + H2O = a ribonucleoside 5'-phosphate + phosphate + H(+). The enzyme catalyses GDP + H2O = GMP + phosphate + H(+). The catalysed reaction is UDP + H2O = UMP + phosphate + H(+). It carries out the reaction IDP + H2O = IMP + phosphate + H(+). It catalyses the reaction CDP + H2O = CMP + phosphate + H(+). The enzyme catalyses ADP + H2O = AMP + phosphate + H(+). It functions in the pathway protein modification; protein glycosylation. Hydrolyzes nucleoside diphosphates with a preference for GDP, IDP and UDP compared to ADP and CDP. In the lumen of the endoplasmic reticulum, hydrolyzes UDP that acts as an end-product feedback inhibitor of the UDP-Glc:glycoprotein glucosyltransferases. UMP can be transported back by an UDP-sugar antiporter to the cytosol where it is consumed to regenerate UDP-glucose. Therefore, it positively regulates protein reglucosylation by clearing UDP from the ER lumen and by promoting the regeneration of UDP-glucose. Protein reglucosylation is essential to proper glycoprotein folding and quality control in the ER. This chain is Nucleoside diphosphate phosphatase ENTPD5, found in Homo sapiens (Human).